A 527-amino-acid polypeptide reads, in one-letter code: Estrogen receptor beta (527 aa).

The interval 1 to 145 is modulating; it reads MDVKNSPSSL…SPSSKRDAHF (145 aa). A phosphoserine; by MAPK mark is found at S84 and S102. 2 consecutive NR C4-type zinc fingers follow at residues 146 to 166 and 182 to 206; these read CAVC…CEGC and CPAT…LRKC. A DNA-binding region (nuclear receptor) is located at residues 146-211; that stretch reads CAVCSDYASG…RLRKCYEVGM (66 aa). In terms of domain architecture, NR LBD spans 261–495; that stretch reads SPEQLVLTLL…DLLLEMLNAH (235 aa).

This sequence belongs to the nuclear hormone receptor family. NR3 subfamily. Binds DNA as a homodimer. Can form a heterodimer with ESR1. Interacts with NCOA1, NCOA3, NCOA5 and NCOA6 coactivators, leading to a strong increase of transcription of target genes. Interacts with UBE1C and AKAP13. Interacts with DNTTIP2. Interacts with CCDC62 in the presence of estradiol/E2; this interaction seems to enhance the transcription of target genes. Interacts with DNAAF4. Interacts with PRMT2. Interacts with CCAR2 (via N-terminus) in a ligand-independent manner. Interacts with RBM39, in the presence of estradiol (E2). Interacts with STUB1/CHIP. Phosphorylation at Ser-84 and Ser-102 recruits NCOA1. As to expression, present in granulosa cells of antral follicles in various stages of follicular growth.

The protein resides in the nucleus. Nuclear hormone receptor. Binds estrogens with an affinity similar to that of ESR1ESR1/ER-alpha, and activates expression of reporter genes containing estrogen response elements (ERE) in an estrogen-dependent manner. The chain is Estrogen receptor beta (ESR2) from Bos taurus (Bovine).